Consider the following 282-residue polypeptide: Cytochrome c1 (282 aa).

The signal sequence occupies residues 1–24; that stretch reads MTIKLRFVASLALVFGLAAASVPA. Residues Cys62, Cys65, His66, and Met207 each contribute to the heme c site. A helical transmembrane segment spans residues 253–273; that stretch reads WWVLGFLVIFTGLLVATKIVV.

In terms of assembly, the main subunits of complex b-c1 are: cytochrome b, cytochrome c1 and the Rieske protein. Post-translationally, binds 1 heme c group covalently per subunit.

It is found in the cell membrane. In terms of biological role, component of the ubiquinol-cytochrome c reductase complex (complex III or cytochrome b-c1 complex), which is a respiratory chain that generates an electrochemical potential coupled to ATP synthesis. c1 functions as an electron donor to cytochrome c. This is Cytochrome c1 (petC) from Blastochloris viridis (Rhodopseudomonas viridis).